We begin with the raw amino-acid sequence, 364 residues long: Acidic fibroblast growth factor intracellular-binding protein (364 aa).

Position 2 is an N-acetylthreonine (Thr-2).

In terms of assembly, binds to internalized FGF1; this interaction is increased in the presence of CSNKB, suggesting a possible cooperative interaction between CSNKB and FIBP in binding to FGF1. In terms of tissue distribution, highly expressed in heart, skeletal muscle and pancreas. Expressed at lower levels in brain. Also found in placenta, liver and kidney.

The protein localises to the nucleus. It localises to the endomembrane system. Functionally, may be involved in mitogenic function of FGF1. May mediate with IER2 FGF-signaling in the establishment of laterality in the embryo. This Homo sapiens (Human) protein is Acidic fibroblast growth factor intracellular-binding protein (FIBP).